Reading from the N-terminus, the 894-residue chain is Tyrosine-protein kinase receptor UFO (894 aa).

Positions 1 to 25 (MAWRCPRMGRVPLAWCLALCGWACM) are cleaved as a signal peptide. Positions 26-92 (APRGTQAEES…QTQVPLGEDE (67 aa)) are interaction with GAS6. The Extracellular portion of the chain corresponds to 26–451 (APRGTQAEES…STPAFSWPWW (426 aa)). Ig-like C2-type domains are found at residues 27–128 (PRGT…TFVS) and 139–222 (PYFL…ATIT). N-linked (GlcNAc...) asparagine glycosylation is present at Asn-43. Cys-56 and Cys-117 are joined by a disulfide. N-linked (GlcNAc...) asparagine glycosylation is found at Asn-157 and Asn-198. Cys-160 and Cys-205 are joined by a disulfide. Fibronectin type-III domains are found at residues 227 to 331 (QPRN…TPEG) and 336 to 428 (PPEN…AWRP). Residues Asn-339, Asn-345, and Asn-401 are each glycosylated (N-linked (GlcNAc...) asparagine). A helical transmembrane segment spans residues 452–472 (YVLLGAVVAAACVLILALFLV). The Cytoplasmic segment spans residues 473–894 (HRRKKETRYG…PAAPGQEDGA (422 aa)). Residues 536-807 (VALGKTLGEG…ELREDLENTL (272 aa)) form the Protein kinase domain. ATP contacts are provided by residues 542-550 (LGEGEFGAV) and Lys-567. Asp-672 functions as the Proton acceptor in the catalytic mechanism. Residues Tyr-703, Tyr-779, and Tyr-821 each carry the phosphotyrosine; by autocatalysis modification. 2 disordered regions span residues 823–853 (NMDE…DSCS) and 866–894 (YVLC…EDGA). Tyr-866 carries the post-translational modification Phosphotyrosine; by autocatalysis. Phosphoserine is present on Ser-884.

Belongs to the protein kinase superfamily. Tyr protein kinase family. AXL/UFO subfamily. As to quaternary structure, heterodimer and heterotetramer with ligand GAS6. Interacts with CBL, GRB2, LCK, NCK2, PIK3R1, PIK3R2, PIK3R3, PLCG1, SOCS1 and TNS2. Part of a complex including AXL, TNK2 and GRB2, in which GRB2 promotes AXL recruitment by TNK2. In terms of processing, monoubiquitinated upon GAS6-binding. A very small proportion of the receptor could be subjected to polyubiquitination in a very transient fashion. Phosphorylated at tyrosine residues by autocatalysis, which activates kinase activity. As to expression, highly expressed in metastatic colon tumors. Expressed in primary colon tumors. Weakly expressed in normal colon tissue.

It is found in the cell membrane. The catalysed reaction is L-tyrosyl-[protein] + ATP = O-phospho-L-tyrosyl-[protein] + ADP + H(+). With respect to regulation, activated by GAS6-binding and subsequent autophosphorylation. In terms of biological role, receptor tyrosine kinase that transduces signals from the extracellular matrix into the cytoplasm by binding growth factor GAS6 and which is thus regulating many physiological processes including cell survival, cell proliferation, migration and differentiation. Ligand binding at the cell surface induces dimerization and autophosphorylation of AXL. Following activation by ligand, AXL binds and induces tyrosine phosphorylation of PI3-kinase subunits PIK3R1, PIK3R2 and PIK3R3; but also GRB2, PLCG1, LCK and PTPN11. Other downstream substrate candidates for AXL are CBL, NCK2, SOCS1 and TNS2. Recruitment of GRB2 and phosphatidylinositol 3 kinase regulatory subunits by AXL leads to the downstream activation of the AKT kinase. GAS6/AXL signaling plays a role in various processes such as endothelial cell survival during acidification by preventing apoptosis, optimal cytokine signaling during human natural killer cell development, hepatic regeneration, gonadotropin-releasing hormone neuron survival and migration, platelet activation, or regulation of thrombotic responses. Also plays an important role in inhibition of Toll-like receptors (TLRs)-mediated innate immune response. (Microbial infection) Acts as a receptor for lassa virus and lymphocytic choriomeningitis virus, possibly through GAS6 binding to phosphatidyl-serine at the surface of virion envelope. Its function is as follows. (Microbial infection) Acts as a receptor for Ebolavirus, possibly through GAS6 binding to phosphatidyl-serine at the surface of virion envelope. Functionally, (Microbial infection) Promotes Zika virus entry in glial cells, Sertoli cells and astrocytes. Additionally, Zika virus potentiates AXL kinase activity to antagonize type I interferon signaling and thereby promotes infection. Interferon signaling inhibition occurs via an SOCS1-dependent mechanism. The chain is Tyrosine-protein kinase receptor UFO (AXL) from Homo sapiens (Human).